Consider the following 27-residue polypeptide: uncharacterized protein (27 aa).

The protein resides in the plastid. It localises to the chloroplast. This is an uncharacterized protein from Trieres chinensis (Marine centric diatom).